A 324-amino-acid chain; its full sequence is Acetyl-coenzyme A carboxylase carboxyl transferase subunit alpha (324 aa).

Positions 37–291 (ILEDKLENLE…NVVLQKTFEQ (255 aa)) constitute a CoA carboxyltransferase C-terminal domain.

The protein belongs to the AccA family. As to quaternary structure, acetyl-CoA carboxylase is a heterohexamer composed of biotin carboxyl carrier protein (AccB), biotin carboxylase (AccC) and two subunits each of ACCase subunit alpha (AccA) and ACCase subunit beta (AccD).

The protein resides in the cytoplasm. It catalyses the reaction N(6)-carboxybiotinyl-L-lysyl-[protein] + acetyl-CoA = N(6)-biotinyl-L-lysyl-[protein] + malonyl-CoA. It participates in lipid metabolism; malonyl-CoA biosynthesis; malonyl-CoA from acetyl-CoA: step 1/1. Component of the acetyl coenzyme A carboxylase (ACC) complex. First, biotin carboxylase catalyzes the carboxylation of biotin on its carrier protein (BCCP) and then the CO(2) group is transferred by the carboxyltransferase to acetyl-CoA to form malonyl-CoA. The protein is Acetyl-coenzyme A carboxylase carboxyl transferase subunit alpha of Bacillus cytotoxicus (strain DSM 22905 / CIP 110041 / 391-98 / NVH 391-98).